We begin with the raw amino-acid sequence, 343 residues long: MGHRKLASPRRGSAGVRPRKRASEILPTPRSWPTIQSNEPKLLGFVGYKVGMSHIFMIDDKPTSPNYGKEIYVPVSVIETPPVIPLAIRAYVMGPKGEPTTLTEYWGDISEDLLKLIQQRKVTRLKIDKEKMKGKLDEINNKLNDILYLRVLIATQPKLVPSLGKKKPEIVEVQVGGGDIKSQLNYVLNILGKPLSVKDVFKEGQLIDIIGVTKGKGFQGVVKRYGVVELPRWHKHRKGSRKVGARGPSFSTPSYVPQPGQMGYHRRTEYNKRILKISDDPNEINPKGGFVNYGIVRNTYLIIEGSIIGAKKRPLFLRYPIRPSWIPQSAPKITYVNLYSQQG.

Disordered stretches follow at residues 1 to 31 and 238 to 262; these read MGHR…TPRS and KGSR…PGQM.

This sequence belongs to the universal ribosomal protein uL3 family. As to quaternary structure, part of the 50S ribosomal subunit. Forms a cluster with proteins L14 and L24e.

One of the primary rRNA binding proteins, it binds directly near the 3'-end of the 23S rRNA, where it nucleates assembly of the 50S subunit. The chain is Large ribosomal subunit protein uL3 from Sulfurisphaera tokodaii (strain DSM 16993 / JCM 10545 / NBRC 100140 / 7) (Sulfolobus tokodaii).